The chain runs to 151 residues: MLLLLLLLLLGPGPGFSEATRRSHVYKRGLLELAGTLDCVGPRSPMAYMNYGCYCGLGGHGEPRDAIDWCCYHHDCCYSRAQDAGCSPKLDRYPWKCMDHHILCGPAENKCQELLCRCDEELAYCLAGTEYHLKYLFFPSILCEKDSPKCN.

Positions M1–S17 are cleaved as a signal peptide. The propeptide occupies E18–R28. Intrachain disulfides connect C39–C97, C53–C143, C55–C71, C70–C125, C76–C150, C77–C118, C86–C111, and C104–C116. Y54, G56, and G58 together coordinate Ca(2+). H74 is a catalytic residue. Residue D75 participates in Ca(2+) binding. D119 is an active-site residue.

This sequence belongs to the phospholipase A2 family. Interacts with PLA2R1; this interaction mediates PLA2G10 clearance and inactivation. Ca(2+) serves as cofactor. Expressed at high levels in testis and the gastrointestinal tract including stomach and colon. Expressed at lower levels in other tissues including small intestine, uterus, oviduct, lung, thymus, spleen and brain. Expressed in Paneth-like secretory epithelial cells of the colon. Expressed in gastric and ileac epithelial cells and in glandular epithelium of intestinal mucosa (at protein level). Expressed in late spermatogenic cells, spermatocytes and spermatids, but not spermatogonia in seminiferous tubules (at protein level). Expressed mainly in the apical side of endometrial epithelial cells and in the interstitium beneath the epithelium of uterus (at protein level). Expressed in resident spleen macrophages (at protein level). Expressed at outermost layer of hair follicles. Expressed in dorsal root ganglia in both NEFH-positive A-fibers and PRPH-positive C-fibers (at protein level).

It is found in the secreted. It localises to the lysosome. Its subcellular location is the cytoplasmic vesicle. The protein resides in the secretory vesicle. The protein localises to the acrosome. It catalyses the reaction a 1,2-diacyl-sn-glycero-3-phosphocholine + H2O = a 1-acyl-sn-glycero-3-phosphocholine + a fatty acid + H(+). The catalysed reaction is 1-hexadecanoyl-2-(9Z-octadecenoyl)-sn-glycero-3-phosphocholine + H2O = 1-hexadecanoyl-sn-glycero-3-phosphocholine + (9Z)-octadecenoate + H(+). The enzyme catalyses 1-octadecanoyl-2-(5Z,8Z,11Z,14Z-eicosatetraenoyl)-sn-glycero-3-phosphocholine + H2O = 1-octadecanoyl-sn-glycero-3-phosphocholine + (5Z,8Z,11Z,14Z)-eicosatetraenoate + H(+). It carries out the reaction 1,2-dihexadecanoyl-sn-glycero-3-phosphocholine + H2O = 1-hexadecanoyl-sn-glycero-3-phosphocholine + hexadecanoate + H(+). It catalyses the reaction 1-hexadecanoyl-2-(9Z-octadecenoyl)-sn-glycero-3-phosphoglycerol + H2O = 1-hexadecanoyl-sn-glycero-3-phosphoglycerol + (9Z)-octadecenoate + H(+). The catalysed reaction is 1,2-dihexadecanoyl-sn-glycero-3-phospho-(1'-sn-glycerol) + H2O = 1-hexadecanoyl-sn-glycero-3-phospho-(1'-sn-glycerol) + hexadecanoate + H(+). The enzyme catalyses 1-hexadecanoyl-2-(9Z-octadecenoyl)-sn-glycero-3-phospho-L-serine + H2O = 1-hexadecanoyl-sn-glycero-3-phospho-L-serine + (9Z)-octadecenoate + H(+). It carries out the reaction 1-hexadecanoyl-2-(9Z,12Z-octadecadienoyl)-sn-glycero-3-phosphoethanolamine + H2O = 1-hexadecanoyl-sn-glycero-3-phosphoethanolamine + (9Z,12Z)-octadecadienoate + H(+). It catalyses the reaction 1-hexadecanoyl-2-(9Z-octadecenoyl)-sn-glycero-3-phosphate + H2O = 1-hexadecanoyl-sn-glycero-3-phosphate + (9Z)-octadecenoate + H(+). The catalysed reaction is 1-O-hexadecyl-2-acetyl-sn-glycero-3-phosphocholine + H2O = 1-O-hexadecyl-sn-glycero-3-phosphocholine + acetate + H(+). Its function is as follows. Secretory calcium-dependent phospholipase A2 that primarily targets extracellular phospholipids. Hydrolyzes the ester bond of the fatty acyl group attached at sn-2 position of phospholipids with preference for phosphatidylcholines and phosphatidylglycerols over phosphatidylethanolamines. Preferentially releases sn-2 omega-6 and omega-3 polyunsaturated fatty acyl (PUFA) chains over saturated fatty acyls. Contributes to phospholipid remodeling of very low-density lipoprotein (VLDL), low-density lipoprotein (LDL) and high-density lipoprotein (HDL) particles. Hydrolyzes LDL phospholipids releasing unsaturated fatty acids that regulate macrophage differentiation toward foam cells. Efficiently hydrolyzes and inactivates PAF, a potent lipid mediator present in oxidized LDL. May act in an autocrine and paracrine manner. Secreted by lung epithelium, targets membrane phospholipids of infiltrating eosinophils, releasing arachidonate and boosting eicosanoid and cysteinyl leukotriene synthesis involved in airway inflammatory response. Secreted by gut epithelium, hydrolyzes dietary and biliary phosphatidylcholines in the gastrointestinal lumen, thereby regulating adipogenesis and body weight. Plays a stem cell regulator role in colon epithelium. Within intracellular compartment, mediates Paneth-like cell differentiation and its stem cell supporting functions by inhibiting Wnt signaling pathway in intestinal stem cell (ISC). Secreted in the intestinal lumen upon inflammation, acts in an autocrine way and promotes prostaglandin E2 synthesis that stimulates the Wnt signaling pathway in ISCs and tissue regeneration. May participate in hair follicle morphogenesis by regulating phosphatidylethanolamines metabolism at the outermost epithelial layer and facilitating melanin synthesis. By generating lysophosphatidylcholines (LPCs) at sperm acrosome controls sperm cell capacitation, acrosome reaction and overall fertility. May promote neurite outgrowth in neuron fibers involved in nociception. Contributes to lipid remodeling of cellular membranes and generation of lipid mediators involved in pathogen clearance. Cleaves sn-2 fatty acyl chains of phosphatidylglycerols and phosphatidylethanolamines, which are major components of membrane phospholipids in bacteria. Displays bactericidal activity against Gram-positive bacteria by directly hydrolyzing phospholipids of the bacterial membrane. In pulmonary epithelium, may contribute to host defense response against adenoviral infection. Prevents adenovirus entry into host cells by hydrolyzing host cell plasma membrane, releasing C16:0 LPCs that inhibit virus-mediated membrane fusion and viral infection. Likely prevents adenoviral entry into the endosomes of host cells. May play a role in maturation and activation of innate immune cells including macrophages, group 2 innate lymphoid cells and mast cells. The sequence is that of Group 10 secretory phospholipase A2 (Pla2g10) from Mus musculus (Mouse).